The following is a 150-amino-acid chain: Cytochrome c oxidase subunit 5A, mitochondrial (150 aa).

A mitochondrion-targeting transit peptide spans 1-41 (MLGAALRRCAVAATTWAGPRGLLHSARTPGPAAAIQSVRCY). Residues 2–20 (LGAALRRCAVAATTWAGPR) carry the SIFI-degron motif. Residues K87 and K113 each carry the N6-acetyllysine modification. Position 141 is a phosphothreonine (T141).

It belongs to the cytochrome c oxidase subunit 5A family. As to quaternary structure, component of the cytochrome c oxidase (complex IV, CIV), a multisubunit enzyme composed of 14 subunits. The complex is composed of a catalytic core of 3 subunits MT-CO1, MT-CO2 and MT-CO3, encoded in the mitochondrial DNA, and 11 supernumerary subunits COX4I, COX5A, COX5B, COX6A, COX6B, COX6C, COX7A, COX7B, COX7C, COX8 and NDUFA4, which are encoded in the nuclear genome. The complex exists as a monomer or a dimer and forms supercomplexes (SCs) in the inner mitochondrial membrane with NADH-ubiquinone oxidoreductase (complex I, CI) and ubiquinol-cytochrome c oxidoreductase (cytochrome b-c1 complex, complex III, CIII), resulting in different assemblies (supercomplex SCI(1)III(2)IV(1) and megacomplex MCI(2)III(2)IV(2)). Interacts with AFG1L. Interacts with RAB5IF. In terms of processing, in response to mitochondrial stress, the precursor protein is ubiquitinated by the SIFI complex in the cytoplasm before mitochondrial import, leading to its degradation. Within the SIFI complex, UBR4 initiates ubiquitin chain that are further elongated or branched by KCMF1.

The protein localises to the mitochondrion inner membrane. The protein operates within energy metabolism; oxidative phosphorylation. In terms of biological role, component of the cytochrome c oxidase, the last enzyme in the mitochondrial electron transport chain which drives oxidative phosphorylation. The respiratory chain contains 3 multisubunit complexes succinate dehydrogenase (complex II, CII), ubiquinol-cytochrome c oxidoreductase (cytochrome b-c1 complex, complex III, CIII) and cytochrome c oxidase (complex IV, CIV), that cooperate to transfer electrons derived from NADH and succinate to molecular oxygen, creating an electrochemical gradient over the inner membrane that drives transmembrane transport and the ATP synthase. Cytochrome c oxidase is the component of the respiratory chain that catalyzes the reduction of oxygen to water. Electrons originating from reduced cytochrome c in the intermembrane space (IMS) are transferred via the dinuclear copper A center (CU(A)) of subunit 2 and heme A of subunit 1 to the active site in subunit 1, a binuclear center (BNC) formed by heme A3 and copper B (CU(B)). The BNC reduces molecular oxygen to 2 water molecules using 4 electrons from cytochrome c in the IMS and 4 protons from the mitochondrial matrix. This Macaca mulatta (Rhesus macaque) protein is Cytochrome c oxidase subunit 5A, mitochondrial (COX5A).